The primary structure comprises 124 residues: Darcynin homolog (124 aa).

This sequence belongs to the darcynin family.

The protein is Darcynin homolog of Granulibacter bethesdensis (strain ATCC BAA-1260 / CGDNIH1).